Consider the following 145-residue polypeptide: Protein SprT-like (145 aa).

The region spanning 4-140 (TNYVQEVSLA…VCGNCHGKLM (137 aa)) is the SprT-like domain. Histidine 64 serves as a coordination point for Zn(2+). The active site involves glutamate 65. A Zn(2+)-binding site is contributed by histidine 68.

This sequence belongs to the SprT family. It depends on Zn(2+) as a cofactor.

The protein localises to the cytoplasm. This chain is Protein SprT-like, found in Streptococcus pyogenes serotype M3 (strain SSI-1).